A 491-amino-acid chain; its full sequence is Glutamyl-tRNA(Gln) amidotransferase subunit A (491 aa).

The active-site Charge relay system is serine 158. Serine 182 acts as the Acyl-ester intermediate in catalysis.

This sequence belongs to the amidase family. GatA subfamily. In terms of assembly, heterotrimer of A, B and C subunits.

The catalysed reaction is L-glutamyl-tRNA(Gln) + L-glutamine + ATP + H2O = L-glutaminyl-tRNA(Gln) + L-glutamate + ADP + phosphate + H(+). In terms of biological role, allows the formation of correctly charged Gln-tRNA(Gln) through the transamidation of misacylated Glu-tRNA(Gln) in organisms which lack glutaminyl-tRNA synthetase. The reaction takes place in the presence of glutamine and ATP through an activated gamma-phospho-Glu-tRNA(Gln). The polypeptide is Glutamyl-tRNA(Gln) amidotransferase subunit A (Bradyrhizobium diazoefficiens (strain JCM 10833 / BCRC 13528 / IAM 13628 / NBRC 14792 / USDA 110)).